The chain runs to 1654 residues: MSTEPVSSLALPAPAILPTTPIPASTQQASSLVSDQIQEASTASQKSVTSITQPPIPSQQQPPQHITANHPASIAAAATVALSATLLNPNEWNALASTSMVTLDDLRSAFLEQRQQQLKDLERSHRESLREMIFMSENYDKEDVAGSPWKLGQSLQVAEDDAREHVKSFLDQHRLALDPKMSIKDHILEQPKLLRQRVSQELKTGPIELAPPPTPTSATAPSAGEAQRDRDLKREIEQNNLHRSQAVARAAAAVQAHAIAEGVAKIKPLTITAAESQGVRVAPLQPGQVPSFVIESTTPIAHIVASSDSSTAVLVASDAQKVDSHTTMSAAEAVTPAIKVESTDNIDASPSKASHALEKAVSPVPGLARNASTQSTSLRVPPSPMVVPTIPENITAPPLHPTLQVLAPNPLSVTYAASLRPLPPDPTRRITGAGLSGGAIHHRSGRKITSLSNHSNVNSYSSIAAAKIGPAGSGQADLYRWYVRARASPGAGMVGKADKCLMTSDWRVAFNEQRFVRAMARIEKLKAQGEWSFRQPKKQKGPVVRKAHWDHLLEEMKWLQTDFREERRWKMTVAFHLAHEVAAWHRARTPAERAQFCVHVQRSYRHRTISDNVEQHNTDKLSAKEVVSSSQPFQAAAASLDDVEMTHSTSSSHIQKDGEPATVKAESGQPVEDADVTMDGGADADEAVTQAVESALQTTNEAASARAEEMDADGEDDADTDANDVEAATAALVSGEPSKPPKVEVVREPLSQPQPMPTLADVSVPTTSSATPTVPASSTPTTAANDKLVHALRSQPKDADSTLTAEMPPQLLATLRAPIFSTSVTTTVVSPAALLDSLNPEAAAALLGIEVSDLANAADLLEPGSLSFSKMFPELPLYGGVSLPESNSKSDRRWDEGSLNQPPRLTHVTKLLDSRPLLVSTLEPSKNRANGRWLADSDWVVAAEQSDPLRGVTDGADTALPPMPGSLLFARKSNRAAKDASGPASTTPAEPASPDARAALFVWTPDEDNYLMTLAKQYHNNWALVADLFNSTRLNTATDKREAWDCYDRCKRIEQAAAEGKPPPGPPPMPAPAADADKDSKKGDGKDADASSSKRDKLSKKSGSKHDGSKRKQRRSNLMEVMRRSAKRREATKQAQQTQQTKKVNLNTHETHAQIKAGPAITPQSLSALKTERDQAALRQYYEQQRAQLAYQQQQQQQQRLLAQQAQAQRMAQQQGTAGTSAPAATAVTQAGKAGTAIVAGGTGGVGNVSLLPAGTPAASAGPAGQAQQKAATGQGTNQAIAQQTQQQQQQPQSQQTAQMQVQQPPAAAAAAQQQQQQQVQLQSQLQASQAAQMQNLYAQMQQQQQQQQRQQQQQLGQAAAGLAQVRPGVGALTQQQLATLTPQQQQQYHAQLAAATAAAQQQQLRSQMAAVAAAQGGQAGFQLPNAQAQAQAQAQAQFQLMQQQQQQQNVMQNQGRPAMAQQAQQAALQMYQQQQRQAQMRPPQPTQPFAARPNARPGTAASSQAKPQAAARSATPAPPMPATVQALQQQLAISLATSNLSAEQINGLAIQLYKQAQQQQQQQQQQQQQQQQQQQQQQQQQQQQQQQQQQQQQQQQQQQPQQPAPTQQRPPPQQLLNQAIQALAAQTQKNQQPAPTVHGVTGSPVRPPTPRPS.

6 disordered regions span residues 1 to 66 (MSTE…PQHI), 204 to 229 (TGPIELAPPPTPTSATAPSAGEAQRD), 609 to 679 (ISDN…VTMD), 693 to 720 (ESALQTTNEAASARAEEMDADGEDDADT), 883 to 902 (LPESNSKSDRRWDEGSLNQP), and 974 to 993 (NRAAKDASGPASTTPAEPAS). A compositionally biased stretch (low complexity) spans 7–26 (SSLALPAPAILPTTPIPAST). Positions 27–48 (QQASSLVSDQIQEASTASQKSV) are enriched in polar residues. Over residues 49–64 (TSITQPPIPSQQQPPQ) the composition is skewed to low complexity. Residues 536–611 (PKKQKGPVVR…RSYRHRTISD (76 aa)) enclose the HSA domain. Positions 613-623 (VEQHNTDKLSA) are enriched in basic and acidic residues. Residues 628-639 (SSSQPFQAAAAS) are compositionally biased toward low complexity. Residues 693-702 (ESALQTTNEA) are compositionally biased toward polar residues. Residues 710 to 720 (MDADGEDDADT) show a composition bias toward acidic residues. Low complexity predominate over residues 980 to 993 (ASGPASTTPAEPAS). Residues 995–1048 (DARAALFVWTPDEDNYLMTLAKQYHNNWALVADLFNSTRLNTATDKREAWDCYD) enclose the Myb-like domain. Disordered stretches follow at residues 1057 to 1159 (AAEG…KAGP), 1257 to 1304 (PAAS…QVQQ), 1449 to 1523 (QNVM…PMPA), and 1570 to 1654 (QQQQ…PRPS). Positions 1061–1071 (KPPPGPPPMPA) are enriched in pro residues. The segment covering 1075–1096 (DADKDSKKGDGKDADASSSKRD) has biased composition (basic and acidic residues). The span at 1097–1115 (KLSKKSGSKHDGSKRKQRR) shows a compositional bias: basic residues. Over residues 1133–1143 (KQAQQTQQTKK) the composition is skewed to low complexity. Composition is skewed to low complexity over residues 1449–1482 (QNVMQNQGRPAMAQQAQQAALQMYQQQQRQAQMR), 1500–1516 (TAASSQAKPQAAARSAT), 1570–1608 (QQQQQQQQQQQQQQQQQQQQQQQQQQQQQQQPQQPAPTQ), and 1615–1629 (QLLNQAIQALAAQTQ).

Belongs to the EAF1 family. Component of the NuA4 histone acetyltransferase complex.

The protein resides in the nucleus. Functionally, component of the NuA4 histone acetyltransferase complex which is involved in transcriptional activation of selected genes principally by acetylation of nucleosomal histone H4 and H2A. The NuA4 complex is also involved in DNA repair. In Mycosarcoma maydis (Corn smut fungus), this protein is Chromatin modification-related protein EAF1 (EAF1).